Reading from the N-terminus, the 484-residue chain is PTS system MurNAc-GlcNAc-specific EIIBC component (484 aa).

The PTS EIIB type-1 domain occupies 5-87; it reads QQLAERIIAA…AELSGVKLGD (83 aa). Cysteine 27 serves as the catalytic Phosphocysteine intermediate; for EIIB activity. Residues 130 to 484 form the PTS EIIC type-1 domain; it reads KSIANIFIPL…AMRQTDLLGD (355 aa). 10 helical membrane-spanning segments follow: residues 135 to 155, 160 to 180, 200 to 220, 234 to 254, 274 to 294, 305 to 325, 349 to 369, 384 to 404, 408 to 428, and 450 to 470; these read IFIP…IAAV, MVAG…FNVI, FGAT…TGIA, LQPG…LSIV, IALL…AGFV, IISI…LPLV, LLPI…ALWV, ALPV…TLPL, FLTA…IGHI, and LGYI…TYLF.

The protein localises to the cell membrane. It catalyses the reaction N-acetyl-beta-D-muramate-(1-&gt;4)-N-acetyl-D-glucosamine(out) + N(pros)-phospho-L-histidyl-[protein] = 6-phospho-N-acetyl-beta-D-muramate-(1-&gt;4)-N-acetyl-D-glucosamine(in) + L-histidyl-[protein]. Its pathway is cell wall biogenesis; peptidoglycan recycling. The phosphoenolpyruvate-dependent sugar phosphotransferase system (sugar PTS), a major carbohydrate active transport system, catalyzes the phosphorylation of incoming sugar substrates concomitantly with their translocation across the cell membrane. This system is involved in the uptake and phosphorylation of MurNAc-GlcNAc, the principle peptidoglycan turnover product of S.aureus, yielding cytoplasmic MurNAc 6P-GlcNAc. This Staphylococcus aureus (strain bovine RF122 / ET3-1) protein is PTS system MurNAc-GlcNAc-specific EIIBC component.